Consider the following 314-residue polypeptide: Short-chain dehydrogenase/reductase drtF (314 aa).

NADP(+) is bound by residues V26, K50, D73, N100, Y185, and K189. Residue Y185 is the Proton acceptor of the active site. The Lowers pKa of active site Tyr role is filled by K189.

It belongs to the short-chain dehydrogenases/reductases (SDR) family.

Its pathway is secondary metabolite biosynthesis; terpenoid biosynthesis. In terms of biological role, short-chain dehydrogenase/reductase; part of the gene cluster that mediates the biosynthesis of various drimane-type sesquiterpene esters, compounds that exhibit diverse biological activities and are widely present in eukaryotes. The pathway begins with the synthesis of the backbone drimenol by the terpene cyclase drtB using farnesyl pyrophosphate (FPP) as substrate. The cytochrome P450 monooxygenase drtD is then responsible for the hydroxylations at C-6, C-9 and C-12, as well as the oxidation of hydroxyl groups at C-6 and C-11 to a ketone and an aldehyde, respectively. Then, the biosynthesis can go in two directions, either the hydroxylated drimenol is further hydroxylated at C-2 and C-3 by an enzyme(s) not associated with the drt cluster, or the FAD-binding oxidoreductase drtC further oxidizes C-11 or C-12 to form the butyrolactone ring. DrtB, drtD and drtC are solely responsible for the formation of the different drimane structures observed during drimane sesquiterpenes biosynthesis. The polyketide synthase drtA synthesizes different lengths (C6 and C8) of PKS chains, which are then oxidized to varying degrees by the short-chain dehydrogenase drtF. Finally, these PKS chains are transferred onto drimane sesquiterpenes by the acyltransferase drtE, forming the sesquiterpene esters. In addition to the different fatty acyl-CoA chains produced by drtA, drtE is also able to use cinnamoyl-CoA as a substrate. The sequence is that of Short-chain dehydrogenase/reductase drtF from Aspergillus calidoustus.